Here is a 480-residue protein sequence, read N- to C-terminus: NADH-quinone oxidoreductase subunit N 1 (480 aa).

A run of 14 helical transmembrane segments spans residues 12–32 (LSMP…IGVF), 38–58 (TPTV…WLVL), 78–98 (FMKV…VGHA), 106–126 (FEFP…ISAN), 128–148 (LISL…VAAI), 163–183 (FVLG…VYGF), 203–223 (LGLV…ISAV), 241–261 (TAFF…RIVI), 271–291 (WQQI…FAAI), 303–323 (SSIG…MAGV), 326–346 (VILY…CILA), 372–392 (ATVL…AGFF), 396–416 (FVFV…GVLA), and 449–469 (LVFG…GPLG).

The protein belongs to the complex I subunit 2 family. In terms of assembly, NDH-1 is composed of 14 different subunits. Subunits NuoA, H, J, K, L, M, N constitute the membrane sector of the complex.

The protein resides in the cell inner membrane. The enzyme catalyses a quinone + NADH + 5 H(+)(in) = a quinol + NAD(+) + 4 H(+)(out). NDH-1 shuttles electrons from NADH, via FMN and iron-sulfur (Fe-S) centers, to quinones in the respiratory chain. The immediate electron acceptor for the enzyme in this species is believed to be ubiquinone. Couples the redox reaction to proton translocation (for every two electrons transferred, four hydrogen ions are translocated across the cytoplasmic membrane), and thus conserves the redox energy in a proton gradient. The polypeptide is NADH-quinone oxidoreductase subunit N 1 (Rhizobium meliloti (strain 1021) (Ensifer meliloti)).